Consider the following 82-residue polypeptide: Small ribosomal subunit protein bS16 (82 aa).

It belongs to the bacterial ribosomal protein bS16 family.

The protein is Small ribosomal subunit protein bS16 of Klebsiella pneumoniae (strain 342).